Consider the following 177-residue polypeptide: Large ribosomal subunit protein uL6 (177 aa).

This sequence belongs to the universal ribosomal protein uL6 family. As to quaternary structure, part of the 50S ribosomal subunit.

In terms of biological role, this protein binds to the 23S rRNA, and is important in its secondary structure. It is located near the subunit interface in the base of the L7/L12 stalk, and near the tRNA binding site of the peptidyltransferase center. The chain is Large ribosomal subunit protein uL6 from Albidiferax ferrireducens (strain ATCC BAA-621 / DSM 15236 / T118) (Rhodoferax ferrireducens).